We begin with the raw amino-acid sequence, 3122 residues long: Laminin subunit alpha-2 (3122 aa).

The first 22 residues, 1 to 22 (MPGAAGVLLLLLLSGGLGGVQA), serve as a signal peptide directing secretion. Residues 35–286 (QQRGLFPAVL…SVKDISVGGM (252 aa)) form the Laminin N-terminal domain. Residues Asn-55 and Asn-89 are each glycosylated (N-linked (GlcNAc...) asparagine). Cystine bridges form between Cys-287/Cys-296, Cys-289/Cys-307, Cys-309/Cys-318, Cys-321/Cys-341, Cys-344/Cys-353, and Cys-346/Cys-378. Laminin EGF-like domains are found at residues 287 to 343 (CICY…ECEA), 344 to 413 (CNCH…PCQP), 414 to 468 (CHCD…DCKA), and 469 to 517 (CNCS…GCDE). The N-linked (GlcNAc...) asparagine glycan is linked to Asn-303. Residues Asn-363 and Asn-380 are each glycosylated (N-linked (GlcNAc...) asparagine). Intrachain disulfides connect Cys-381/Cys-390, Cys-393/Cys-411, Cys-414/Cys-426, Cys-416/Cys-442, Cys-444/Cys-453, Cys-456/Cys-466, Cys-469/Cys-482, Cys-471/Cys-486, Cys-488/Cys-497, and Cys-500/Cys-515. Residue Asn-470 is glycosylated (N-linked (GlcNAc...) asparagine). The region spanning 518-527 (CFCSGVSNRC) is the Laminin EGF-like 5; first part domain. The region spanning 531 to 723 (YWTYGKIQDM…DGSIAAAVEV (193 aa)) is the Laminin IV type A 1 domain. In terms of domain architecture, Laminin EGF-like 5; second part spans 724 to 756 (CQCPPGYTGSSCESCWPRHRRVNGTIFGGICEP). A glycan (N-linked (GlcNAc...) asparagine) is linked at Asn-746. Intrachain disulfides connect Cys-757–Cys-766, Cys-759–Cys-773, Cys-776–Cys-785, Cys-788–Cys-804, Cys-807–Cys-822, Cys-809–Cys-832, Cys-835–Cys-844, Cys-847–Cys-862, Cys-865–Cys-879, Cys-867–Cys-886, Cys-889–Cys-898, Cys-901–Cys-915, Cys-918–Cys-930, Cys-920–Cys-937, Cys-939–Cys-948, Cys-951–Cys-964, Cys-967–Cys-979, Cys-969–Cys-985, Cys-987–Cys-996, Cys-999–Cys-1011, Cys-1014–Cys-1023, Cys-1016–Cys-1030, Cys-1032–Cys-1041, Cys-1044–Cys-1057, Cys-1060–Cys-1072, Cys-1062–Cys-1079, Cys-1081–Cys-1090, Cys-1093–Cys-1103, Cys-1106–Cys-1118, Cys-1108–Cys-1134, Cys-1136–Cys-1145, and Cys-1148–Cys-1163. Laminin EGF-like domains lie at 757 to 806 (CQCF…DCQP), 807 to 864 (CACP…SCQP), 865 to 917 (CQCN…NCQP), 918 to 966 (CRCN…GCVP), 967 to 1013 (CNCN…GCTA), 1014 to 1059 (CECS…GCKA), 1060 to 1105 (CNCS…RCNL), and 1106 to 1165 (CDCF…GCSS). Residue Asn-1061 is glycosylated (N-linked (GlcNAc...) asparagine). The Laminin EGF-like 14; first part domain occupies 1166–1175 (CYCFGTTTQC). The 204-residue stretch at 1176 to 1379 (SEAKGLIRTW…MTPPADLIEK (204 aa)) folds into the Laminin IV type A 2 domain. In terms of domain architecture, Laminin EGF-like 14; second part spans 1380-1419 (CDCPLGYSGLSCEACLPGFYRLRSQPGGRTPGPTLGTCVP). 12 cysteine pairs are disulfide-bonded: Cys-1420-Cys-1429, Cys-1422-Cys-1436, Cys-1439-Cys-1448, Cys-1451-Cys-1466, Cys-1469-Cys-1484, Cys-1471-Cys-1494, Cys-1497-Cys-1506, Cys-1509-Cys-1524, Cys-1527-Cys-1539, Cys-1529-Cys-1546, Cys-1548-Cys-1557, and Cys-1560-Cys-1571. Laminin EGF-like domains are found at residues 1420–1468 (CQCN…DCQQ), 1469–1526 (CACP…SCQE), and 1527–1573 (CECD…ECVF). The domain II and I stretch occupies residues 1574–2144 (CGDECTGLLL…NQARKQANSI (571 aa)). N-linked (GlcNAc...) asparagine glycans are attached at residues Asn-1597, Asn-1614, Asn-1700, Asn-1810, Asn-1901, Asn-1916, Asn-1920, Asn-2017, Asn-2028, Asn-2045, Asn-2126, and Asn-2240. A coiled-coil region spans residues 1630 to 2150 (ERLIQLAEGN…ANSIKVSVSS (521 aa)). 5 Laminin G-like domains span residues 2145–2328 (KVSV…CKGC), 2340–2521 (TIQF…TKGC), 2526–2710 (VYTV…IGRC), 2763–2934 (SKQF…VGTC), and 2939–3110 (QRGT…KALE). A disulfide bridge links Cys-2302 with Cys-2328. N-linked (GlcNAc...) asparagine glycosylation is found at Asn-2360, Asn-2435, and Asn-2478. Cys-2495 and Cys-2521 are disulfide-bonded. Residues Asn-2551, Asn-2558, and Asn-2648 are each glycosylated (N-linked (GlcNAc...) asparagine). Cys-2683 and Cys-2710 form a disulfide bridge. Asn-2868 and Asn-2893 each carry an N-linked (GlcNAc...) asparagine glycan. Cysteines 2909 and 2934 form a disulfide. A compositionally biased stretch (polar residues) spans 3043-3060 (GNQVEAQSPNPASTSADT). A disordered region spans residues 3043-3063 (GNQVEAQSPNPASTSADTNDP).

In terms of assembly, laminin is a complex glycoprotein, consisting of three different polypeptide chains (alpha, beta, gamma), which are bound to each other by disulfide bonds into a cross-shaped molecule comprising one long and three short arms with globules at each end. Alpha-2 is a subunit of laminin-2 (laminin-211 or merosin), laminin-4 (laminin-221 or S-merosin) and laminin-12 (laminin-213). Interacts with FBLN1, FBLN2 and NID2. As to expression, placenta, striated muscle, peripheral nerve, cardiac muscle, pancreas, lung, spleen, kidney, adrenal gland, skin, testis, meninges, choroid plexus, and some other regions of the brain; not in liver, thymus and bone.

It localises to the secreted. The protein resides in the extracellular space. The protein localises to the extracellular matrix. It is found in the basement membrane. Functionally, binding to cells via a high affinity receptor, laminin is thought to mediate the attachment, migration and organization of cells into tissues during embryonic development by interacting with other extracellular matrix components. This Homo sapiens (Human) protein is Laminin subunit alpha-2 (LAMA2).